The following is a 513-amino-acid chain: Histidine ammonia-lyase (513 aa).

Positions 144–146 form a cross-link, 5-imidazolinone (Ala-Gly); the sequence is ASG. At Ser145 the chain carries 2,3-didehydroalanine (Ser).

The protein belongs to the PAL/histidase family. Contains an active site 4-methylidene-imidazol-5-one (MIO), which is formed autocatalytically by cyclization and dehydration of residues Ala-Ser-Gly.

Its subcellular location is the cytoplasm. It carries out the reaction L-histidine = trans-urocanate + NH4(+). Its pathway is amino-acid degradation; L-histidine degradation into L-glutamate; N-formimidoyl-L-glutamate from L-histidine: step 1/3. The chain is Histidine ammonia-lyase from Streptococcus pyogenes serotype M1.